A 166-amino-acid polypeptide reads, in one-letter code: MTKQQMIAMFIAMIITSALVSAATIMGGIWYLNKQAQDSGETSSLLENSPLSFLVTEQPTSKGPSFHPLDKVVLSIKGKKQTHFVMLELAIETRRPERIKDIDNYMPMVQNSLLKLFSDKTFDELQQTGAIDILQNEVKQTLLVAFAKTDIVRDIDDVLLTKYVVQ.

A helical transmembrane segment spans residues 6-26 (MIAMFIAMIITSALVSAATIM).

This sequence belongs to the FliL family.

The protein resides in the cell inner membrane. Its function is as follows. Controls the rotational direction of flagella during chemotaxis. The sequence is that of Flagellar protein LafL (lafL) from Vibrio parahaemolyticus serotype O3:K6 (strain RIMD 2210633).